Reading from the N-terminus, the 255-residue chain is Small ribosomal subunit protein uS2 (255 aa).

The tract at residues 232-255 (ASGRDIGASEEAPIEPALEDEAGA) is disordered.

The protein belongs to the universal ribosomal protein uS2 family.

This Agrobacterium fabrum (strain C58 / ATCC 33970) (Agrobacterium tumefaciens (strain C58)) protein is Small ribosomal subunit protein uS2.